We begin with the raw amino-acid sequence, 346 residues long: Cell division protein ZipA (346 aa).

The Periplasmic segment spans residues 1–6 (MEDLQL). Residues 7-27 (VLFVLGAIAIVAVLVHGFWSI) form a helical membrane-spanning segment. The Cytoplasmic segment spans residues 28 to 346 (RRQQPKSLKD…DYLHRIRANA (319 aa)). Disordered stretches follow at residues 76–103 (ANEAHTPEAPAFNPYLKQEAKTQPQPVE) and 121–145 (QPDFSLQSPTAKEQHRGPKASRQEP).

The protein belongs to the ZipA family. Interacts with FtsZ via their C-terminal domains.

The protein resides in the cell inner membrane. Functionally, essential cell division protein that stabilizes the FtsZ protofilaments by cross-linking them and that serves as a cytoplasmic membrane anchor for the Z ring. Also required for the recruitment to the septal ring of downstream cell division proteins. This is Cell division protein ZipA from Shewanella sp. (strain MR-7).